The chain runs to 113 residues: Urotensin-2B (113 aa).

The first 27 residues, 1–27 (MKVFSTSLWCGLLTLLSVMNLFKSVRG), serve as a signal peptide directing secretion. Residues 28–103 (RPHLSSGHEL…LDNLSSSHTK (76 aa)) constitute a propeptide that is removed on maturation. Cys-107 and Cys-112 form a disulfide bridge.

The protein belongs to the urotensin-2 family.

The protein localises to the secreted. Functionally, potent vasoconstrictor. The polypeptide is Urotensin-2B (Uts2b) (Mus musculus (Mouse)).